A 435-amino-acid chain; its full sequence is AP-2 complex subunit mu (435 aa).

The region spanning 170-434 (RNELFLDVLE…IGRSGIYETR (265 aa)) is the MHD domain. 3 residues coordinate a 1,2-diacyl-sn-glycero-3-phospho-(1D-myo-inositol-3,4,5-trisphosphate): Lys-341, Lys-345, and Lys-354.

Belongs to the adaptor complexes medium subunit family. As to quaternary structure, adaptor protein complex 2 (AP-2) is a heterotetramer composed of two large adaptins (alpha-type subunit and beta-type subunit), a medium adaptin (mu-type subunit) and a small adaptin (sigma-type subunit).

The protein resides in the cell membrane. It is found in the membrane. It localises to the coated pit. Component of the adaptor complexes which link clathrin to receptors in coated vesicles. Clathrin-associated protein complexes are believed to interact with the cytoplasmic tails of membrane proteins, leading to their selection and concentration. AP50 is a subunit of the plasma membrane adaptor. The complex binds polyphosphoinositide-containing lipids. The chain is AP-2 complex subunit mu (ap2m1) from Xenopus tropicalis (Western clawed frog).